The chain runs to 208 residues: Protein GrpE (208 aa).

The span at 1-25 shows a compositional bias: basic and acidic residues; it reads MVDNKDFNEELKESIQEELDNETKS. The interval 1–38 is disordered; that stretch reads MVDNKDFNEELKESIQEELDNETKSENPNIDEEVEEVS. Residues 29–38 are compositionally biased toward acidic residues; the sequence is NIDEEVEEVS.

This sequence belongs to the GrpE family. As to quaternary structure, homodimer.

The protein localises to the cytoplasm. In terms of biological role, participates actively in the response to hyperosmotic and heat shock by preventing the aggregation of stress-denatured proteins, in association with DnaK and GrpE. It is the nucleotide exchange factor for DnaK and may function as a thermosensor. Unfolded proteins bind initially to DnaJ; upon interaction with the DnaJ-bound protein, DnaK hydrolyzes its bound ATP, resulting in the formation of a stable complex. GrpE releases ADP from DnaK; ATP binding to DnaK triggers the release of the substrate protein, thus completing the reaction cycle. Several rounds of ATP-dependent interactions between DnaJ, DnaK and GrpE are required for fully efficient folding. The protein is Protein GrpE of Clostridium perfringens (strain SM101 / Type A).